Reading from the N-terminus, the 446-residue chain is C-type lectin domain family 18 member A (446 aa).

Residues 1-26 (MLHPETSPGRGHLLAVLLALLGTAWA) form the signal peptide. The region spanning 52–182 (LSLHNRLRSW…AAIEAFVCAY (131 aa)) is the SCP domain. Asn144 carries N-linked (GlcNAc...) asparagine glycosylation. Residues 228-261 (PRNPCRMSCQNHGRLNISTCHCHCPPGYTGRYCQ) form the EGF-like domain. 4 cysteine pairs are disulfide-bonded: Cys236-Cys249, Cys251-Cys260, Cys327-Cys432, and Cys408-Cys424. Residues 306–433 (IDGDCFMVSS…CKTRNRYICQ (128 aa)) enclose the C-type lectin domain.

In terms of processing, N-glycosylated. Dectected in all cell lines tested and in peripheral blood cells.

Its subcellular location is the secreted. It is found in the endoplasmic reticulum. The protein resides in the golgi apparatus. It localises to the endosome. Its function is as follows. Binds polysaccharides in a Ca(2+)-independent manner with a preferentially binding to fucoidan, beta-glucans and galactans. The protein is C-type lectin domain family 18 member A (CLEC18A) of Homo sapiens (Human).